The sequence spans 224 residues: DNA mismatch repair protein MutH (224 aa).

The protein belongs to the MutH family.

It is found in the cytoplasm. Functionally, sequence-specific endonuclease that cleaves unmethylated GATC sequences. It is involved in DNA mismatch repair. In Shewanella amazonensis (strain ATCC BAA-1098 / SB2B), this protein is DNA mismatch repair protein MutH.